The chain runs to 208 residues: Ribosomal RNA large subunit methyltransferase E (208 aa).

Positions 63, 65, 83, 99, and 124 each coordinate S-adenosyl-L-methionine. Lysine 164 acts as the Proton acceptor in catalysis.

The protein belongs to the class I-like SAM-binding methyltransferase superfamily. RNA methyltransferase RlmE family.

It is found in the cytoplasm. The enzyme catalyses uridine(2552) in 23S rRNA + S-adenosyl-L-methionine = 2'-O-methyluridine(2552) in 23S rRNA + S-adenosyl-L-homocysteine + H(+). In terms of biological role, specifically methylates the uridine in position 2552 of 23S rRNA at the 2'-O position of the ribose in the fully assembled 50S ribosomal subunit. This Enterobacter sp. (strain 638) protein is Ribosomal RNA large subunit methyltransferase E.